Reading from the N-terminus, the 631-residue chain is Beta-galactosidase-1-like protein 3 (631 aa).

Glutamate 203 serves as the catalytic Proton donor. Glutamate 277 acts as the Nucleophile in catalysis.

It belongs to the glycosyl hydrolase 35 family.

This Rattus norvegicus (Rat) protein is Beta-galactosidase-1-like protein 3 (Glb1l3).